A 592-amino-acid chain; its full sequence is Bifunctional purine biosynthesis protein ATIC (592 aa).

N-acetylmethionine is present on M1. An MGS-like domain is found at M1 to C146. Residues M1–S198 form an IMP cyclohydrolase region. IMP-binding positions include S12 to K14, S34 to T37, R64 to T67, C101 to N102, and D125 to I126. The Proton donor/acceptor; for FAICAR cyclization activity role is filled by K137. An N6-acetyllysine modification is found at K199. The segment at K199 to H592 is AICAR formyltransferase. 5-amino-1-(5-phospho-beta-D-ribosyl)imidazole-4-carboxamide contacts are provided by residues R207 to Y208, H267, G316, D339, N431, and R451. Catalysis depends on H267, which acts as the Proton acceptor; for AICAR formyltransferase activity. Position 452 (I452) interacts with (6R)-10-formyltetrahydrofolate. Residue F541 participates in 5-amino-1-(5-phospho-beta-D-ribosyl)imidazole-4-carboxamide binding. (6R)-10-formyltetrahydrofolate is bound by residues D546 and S565 to T566. R588 contributes to the 5-amino-1-(5-phospho-beta-D-ribosyl)imidazole-4-carboxamide binding site.

It belongs to the PurH family. In terms of assembly, homodimer. Associates with internalized INSR complexes on Golgi/endosomal membranes. Interacts with INSR; ATIC together with PRKAA2/AMPK2 and HACD3/PTPLAD1 is proposed to be part of a signaling network regulating INSR autophosphorylation and endocytosis.

It is found in the cytoplasm. Its subcellular location is the cytosol. The catalysed reaction is (6R)-10-formyltetrahydrofolate + 5-amino-1-(5-phospho-beta-D-ribosyl)imidazole-4-carboxamide = 5-formamido-1-(5-phospho-D-ribosyl)imidazole-4-carboxamide + (6S)-5,6,7,8-tetrahydrofolate. It catalyses the reaction 10-formyldihydrofolate + 5-amino-1-(5-phospho-beta-D-ribosyl)imidazole-4-carboxamide = 5-formamido-1-(5-phospho-D-ribosyl)imidazole-4-carboxamide + 7,8-dihydrofolate. It carries out the reaction IMP + H2O = 5-formamido-1-(5-phospho-D-ribosyl)imidazole-4-carboxamide. It participates in purine metabolism; IMP biosynthesis via de novo pathway; 5-formamido-1-(5-phospho-D-ribosyl)imidazole-4-carboxamide from 5-amino-1-(5-phospho-D-ribosyl)imidazole-4-carboxamide (10-formyl THF route): step 1/1. The protein operates within purine metabolism; IMP biosynthesis via de novo pathway; IMP from 5-formamido-1-(5-phospho-D-ribosyl)imidazole-4-carboxamide: step 1/1. Its activity is regulated as follows. AMP and XMP inhibit AICAR formyltransferase activity. AICAR formyltransferase activity is inhibited by N-(6-fluoro-1-oxo-1,2-dihydroisoquinolin-7-yl)-5- [(3R)-3-hydroxypyrrolidin-1-yl]thiophene-2-sulfonamide (LSN 3213128), which acts as a tumor suppression in cancer cell lines. In terms of biological role, bifunctional enzyme that catalyzes the last two steps of purine biosynthesis. Acts as a transformylase that incorporates a formyl group to the AMP analog AICAR (5-amino-1-(5-phospho-beta-D-ribosyl)imidazole-4-carboxamide) to produce the intermediate formyl-AICAR (FAICAR). Also displays cyclohydrolase activity involving the cyclization of FAICAR to inosine monophosphate (IMP). Can use both 10-formyldihydrofolate and 10-formyltetrahydrofolate as the formyl donor in this reaction. Also catalyzes the cyclization of FAICAR to IMP. Promotes insulin receptor/INSR autophosphorylation and is involved in INSR internalization. This chain is Bifunctional purine biosynthesis protein ATIC (Atic), found in Mus musculus (Mouse).